We begin with the raw amino-acid sequence, 470 residues long: Cysteine--tRNA ligase (470 aa).

C29 contacts Zn(2+). The short motif at 31-41 (PTVYNYAHIGN) is the 'HIGH' region element. Positions 211, 236, and 240 each coordinate Zn(2+). A 'KMSKS' region motif is present at residues 273-277 (KMSKS). Residue K276 participates in ATP binding.

It belongs to the class-I aminoacyl-tRNA synthetase family. In terms of assembly, monomer. Requires Zn(2+) as cofactor.

It localises to the cytoplasm. It catalyses the reaction tRNA(Cys) + L-cysteine + ATP = L-cysteinyl-tRNA(Cys) + AMP + diphosphate. The sequence is that of Cysteine--tRNA ligase from Phenylobacterium zucineum (strain HLK1).